The chain runs to 712 residues: Matrix metalloproteinase-9 (712 aa).

The signal sequence occupies residues 1–19; sequence MSPLQPLVLALLVLACCSA. Positions 20 to 106 are cleaved as a propeptide — activation peptide; that stretch reads VPRRRQPTVV…PRCGVPDVGR (87 aa). A glycan (N-linked (GlcNAc...) asparagine) is linked at Asn38. Positions 97-104 match the Cysteine switch motif; that stretch reads PRCGVPDV. Cys99 is a Zn(2+) binding site. N-linked (GlcNAc...) asparagine glycans are attached at residues Asn120 and Asn127. Asp131 and Asp165 together coordinate Ca(2+). Residues His175 and Asp177 each contribute to the Zn(2+) site. Residues Asp182, Gly183, Asn185, and Leu187 each contribute to the Ca(2+) site. His190 serves as a coordination point for Zn(2+). Ca(2+)-binding residues include Gly197, Gln199, and Asp201. Residue His203 coordinates Zn(2+). 3 residues coordinate Ca(2+): Asp205, Asp206, and Glu208. Fibronectin type-II domains are found at residues 225–273, 283–331, and 342–390; these read AKGA…FCPS, ADGK…FCPT, and AAGE…FCPD. 6 disulfides stabilise this stretch: Cys230-Cys256, Cys244-Cys271, Cys288-Cys314, Cys302-Cys329, Cys347-Cys373, and Cys361-Cys388. His401 contributes to the Zn(2+) binding site. Glu402 is a catalytic residue. His405 and His411 together coordinate Zn(2+). Residues 440–519 form a disordered region; that stretch reads QHLYGPRPEP…PTESPDPAED (80 aa). Low complexity predominate over residues 455 to 465; it reads TTTTTTTTEPQ. The segment covering 491–504 has biased composition (pro residues); sequence TGPPAAGPTGPPTA. Residues 505–514 show a composition bias toward low complexity; that stretch reads GPSAAPTESP. A disulfide bridge connects residues Cys521 and Cys709. Hemopexin repeat units lie at residues 523–568, 569–613, 615–662, and 663–709; these read VDIF…WPAL, PRKL…GLGP, VAQV…FPGV, and PIST…LLKC.

Belongs to the peptidase M10A family. In terms of assembly, exists as monomer or homodimer; disulfide-linked. Also exists as heterodimer with LCN2. Macrophages and transformed cell lines produce only the monomeric form. Interacts with ECM1. It depends on Zn(2+) as a cofactor. Ca(2+) is required as a cofactor. In terms of processing, N- and O-glycosylated.

The protein resides in the secreted. The protein localises to the extracellular space. It is found in the extracellular matrix. The catalysed reaction is Cleavage of gelatin types I and V and collagen types IV and V.. Functionally, matrix metalloproteinase that plays an essential role in local proteolysis of the extracellular matrix and in leukocyte migration. Could play a role in bone osteoclastic resorption. Cleaves KiSS1 at a Gly-|-Leu bond. Cleaves NINJ1 to generate the Secreted ninjurin-1 form. Cleaves type IV and type V collagen into large C-terminal three quarter fragments and shorter N-terminal one quarter fragments. Degrades fibronectin but not laminin or Pz-peptide. In Bos taurus (Bovine), this protein is Matrix metalloproteinase-9.